The sequence spans 290 residues: 33 kDa chaperonin (290 aa).

Disulfide bonds link Cys231–Cys233 and Cys263–Cys266.

Belongs to the HSP33 family. Under oxidizing conditions two disulfide bonds are formed involving the reactive cysteines. Under reducing conditions zinc is bound to the reactive cysteines and the protein is inactive.

It localises to the cytoplasm. In terms of biological role, redox regulated molecular chaperone. Protects both thermally unfolding and oxidatively damaged proteins from irreversible aggregation. Plays an important role in the bacterial defense system toward oxidative stress. This chain is 33 kDa chaperonin, found in Thermotoga sp. (strain RQ2).